Reading from the N-terminus, the 534-residue chain is Replication factor C large subunit (534 aa).

Glycine 45–threonine 52 is an ATP binding site. Residues lysine 444 to lysine 463 show a composition bias toward basic and acidic residues. Positions lysine 444–phenylalanine 534 are disordered. Positions serine 488–threonine 510 are enriched in low complexity. The segment covering threonine 517–arginine 527 has biased composition (basic residues).

It belongs to the activator 1 small subunits family. RfcL subfamily. As to quaternary structure, heteromultimer composed of small subunits (RfcS) and large subunits (RfcL).

In terms of biological role, part of the RFC clamp loader complex which loads the PCNA sliding clamp onto DNA. This chain is Replication factor C large subunit, found in Methanosphaera stadtmanae (strain ATCC 43021 / DSM 3091 / JCM 11832 / MCB-3).